Reading from the N-terminus, the 849-residue chain is Serine/threonine-protein phosphatase 4 regulatory subunit 3B (849 aa).

Residues 1–100 (MSDTRRRVKV…DEIWEKICQV (100 aa)) enclose the WH1 domain. S117 and S695 each carry phosphoserine. Over residues 714–724 (EMWFNEDEEEE) the composition is skewed to acidic residues. The segment at 714 to 849 (EMWFNEDEEE…SPRKRPRLGS (136 aa)) is disordered. The segment covering 733 to 764 (EKPKPEDDFPDNYEKFMETKKAKESEDKENLP) has biased composition (basic and acidic residues). The span at 776–818 (FSHSASAANGTNSKSVVAQIPPATSNGSSSKTTNLPTSVTATK) shows a compositional bias: polar residues. Positions 827–838 (YPDDEEEDEEEE) are enriched in acidic residues. Phosphoserine is present on S840.

It belongs to the SMEK family. In terms of assembly, serine/threonine-protein phosphatase 4 (PP4) occurs in different assemblies of the catalytic and one or more regulatory subunits. Component of the PP4 complex PPP4C-PPP4R2-PPP4R3B. Moderately expressed in tissues and specific brain regions examined.

Its subcellular location is the cytoplasm. The protein localises to the cytoskeleton. The protein resides in the microtubule organizing center. It is found in the centrosome. It localises to the nucleus. Regulatory subunit of serine/threonine-protein phosphatase 4 (PP4). May regulate the activity of PPP4C at centrosomal microtubule organizing centers. This Homo sapiens (Human) protein is Serine/threonine-protein phosphatase 4 regulatory subunit 3B.